The primary structure comprises 62 residues: Chymotrypsin inhibitor SCI-I (62 aa).

Residues Cys-9 to Cys-60 enclose the BPTI/Kunitz inhibitor domain. Cystine bridges form between Cys-9-Cys-60, Cys-19-Cys-43, and Cys-35-Cys-56.

Functionally, inhibits chymotrypsin and thus avoids the accidental chymotrypsin-mediated activation of prophenoloxidase. This enzyme is required by the insect immune system to produce melanin which is used to engulf foreign objects. The sequence is that of Chymotrypsin inhibitor SCI-I from Bombyx mori (Silk moth).